A 311-amino-acid polypeptide reads, in one-letter code: MEVPEDVKRRLTLPFEENFFAGHTACQGCGASLGLRYVLKAYGRKTILVIPACCSTIIAGPWPYSALNANLFHTAFETTGAVISGIEAALKALGYKVKGEDGIMVVGWAGDGGTADIGLQALSGFLERGHDALYIMYDNEAYMNTGIQRSSSTPYGAWTTNTPGGKRHFLEKRHKKKVIDIVIAHRIPYAATASVAYPEDFLRKLKKAQKIPGPSFIQLFAPCPTGWRAPTDKTIEIARLAVQTAYFPLFEYENGKYKINMPNPKKEPKPIEEFLKLQGRFKYMTKEDIEVLQKWVLEEWERLKKLAEVFG.

As to quaternary structure, heterotetramer of one alpha, one beta, one delta and one gamma chain.

The enzyme catalyses 3-methyl-2-oxobutanoate + 2 oxidized [2Fe-2S]-[ferredoxin] + CoA = 2-methylpropanoyl-CoA + 2 reduced [2Fe-2S]-[ferredoxin] + CO2 + H(+). In Pyrococcus abyssi (strain GE5 / Orsay), this protein is Ketoisovalerate oxidoreductase subunit VorB (vorB).